We begin with the raw amino-acid sequence, 676 residues long: Exostosin-like 1 (676 aa).

The Cytoplasmic segment spans residues 1 to 9 (MQSWRRRKS). Residues 10–30 (LWLALSASWLLLVLLGGFSLL) traverse the membrane as a helical; Signal-anchor for type II membrane protein segment. Residues 31-676 (RLALPPRPRP…RKKYRSLEKP (646 aa)) are Lumenal-facing. Positions 238-264 (TADTGSSACPWDGRCEQDPGPGQTQRQ) are disordered. N-linked (GlcNAc...) asparagine glycosylation is present at Asn269. An intrachain disulfide couples Cys584 to Cys634. The tract at residues 610–631 (RQEAAPLAPGGPGPRPKPPAPA) is disordered. The span at 618–631 (PGGPGPRPKPPAPA) shows a compositional bias: pro residues.

Belongs to the glycosyltransferase 47 family.

The protein resides in the endoplasmic reticulum membrane. It catalyses the reaction 3-O-{[(1-&gt;4)-beta-D-GlcA-(1-&gt;4)-alpha-D-GlcNAc](n)-(1-&gt;4)-beta-D-GlcA-(1-&gt;3)-beta-D-Gal-(1-&gt;3)-beta-D-Gal-(1-&gt;4)-beta-D-Xyl}-L-seryl-[protein] + UDP-N-acetyl-alpha-D-glucosamine = 3-O-{alpha-D-GlcNAc-[(1-&gt;4)-beta-D-GlcA-(1-&gt;4)-alpha-D-GlcNAc](n)-(1-&gt;4)-beta-D-GlcA-(1-&gt;3)-beta-D-Gal-(1-&gt;3)-beta-D-Gal-(1-&gt;4)-beta-D-Xyl}-L-seryl-[protein] + UDP + H(+). It functions in the pathway protein modification; protein glycosylation. In terms of biological role, glycosyltransferase required for the biosynthesis of heparan-sulfate (HS). Transfers N-acetyl-alpha-D-glucosamine to the nascent HS chain (GlcNAcT-II activity). Appears to lack GlcNAcT I and GlcAT-II activities. In Homo sapiens (Human), this protein is Exostosin-like 1 (EXTL1).